A 375-amino-acid chain; its full sequence is Erythronate-4-phosphate dehydrogenase (375 aa).

Residues Ser-45 and Thr-66 each coordinate substrate. Residues Asp-146, Thr-175, 206–208 (ASR), and Asp-232 contribute to the NAD(+) site. Arg-208 is an active-site residue. The active site involves Glu-237. Catalysis depends on His-254, which acts as the Proton donor. Gly-257 is a binding site for NAD(+). Tyr-258 is a binding site for substrate.

It belongs to the D-isomer specific 2-hydroxyacid dehydrogenase family. PdxB subfamily. As to quaternary structure, homodimer.

It is found in the cytoplasm. The enzyme catalyses 4-phospho-D-erythronate + NAD(+) = (R)-3-hydroxy-2-oxo-4-phosphooxybutanoate + NADH + H(+). The protein operates within cofactor biosynthesis; pyridoxine 5'-phosphate biosynthesis; pyridoxine 5'-phosphate from D-erythrose 4-phosphate: step 2/5. In terms of biological role, catalyzes the oxidation of erythronate-4-phosphate to 3-hydroxy-2-oxo-4-phosphonooxybutanoate. In Photorhabdus laumondii subsp. laumondii (strain DSM 15139 / CIP 105565 / TT01) (Photorhabdus luminescens subsp. laumondii), this protein is Erythronate-4-phosphate dehydrogenase.